The following is a 312-amino-acid chain: Lipoyl synthase (312 aa).

Cys51, Cys56, Cys62, Cys77, Cys81, Cys84, and Ser290 together coordinate [4Fe-4S] cluster. In terms of domain architecture, Radical SAM core spans 63 to 280 (WSRKTATYLA…RTIGTSLGLF (218 aa)).

Belongs to the radical SAM superfamily. Lipoyl synthase family. It depends on [4Fe-4S] cluster as a cofactor.

Its subcellular location is the cytoplasm. The enzyme catalyses [[Fe-S] cluster scaffold protein carrying a second [4Fe-4S](2+) cluster] + N(6)-octanoyl-L-lysyl-[protein] + 2 oxidized [2Fe-2S]-[ferredoxin] + 2 S-adenosyl-L-methionine + 4 H(+) = [[Fe-S] cluster scaffold protein] + N(6)-[(R)-dihydrolipoyl]-L-lysyl-[protein] + 4 Fe(3+) + 2 hydrogen sulfide + 2 5'-deoxyadenosine + 2 L-methionine + 2 reduced [2Fe-2S]-[ferredoxin]. Its pathway is protein modification; protein lipoylation via endogenous pathway; protein N(6)-(lipoyl)lysine from octanoyl-[acyl-carrier-protein]: step 2/2. Its function is as follows. Catalyzes the radical-mediated insertion of two sulfur atoms into the C-6 and C-8 positions of the octanoyl moiety bound to the lipoyl domains of lipoate-dependent enzymes, thereby converting the octanoylated domains into lipoylated derivatives. The sequence is that of Lipoyl synthase from Chlamydia caviae (strain ATCC VR-813 / DSM 19441 / 03DC25 / GPIC) (Chlamydophila caviae).